A 392-amino-acid polypeptide reads, in one-letter code: MRFHDSILIFFSLASLYQHVHGARQVVRPKEKMTTSEEVKPWLRTVYGSQKELVTPTVIAGVTFSEKPEETPNPLKPWVSLEHDGRPKTIKPEINKGRTKKGRPDYSTYFKTVSSHTYSYEELKAHNMGPNEVFVEEEYIDEDDTYVSLNPIVRCTPNLYFNKGLAKDIRSEPFCTPYENSRWKVDKTYFVTWYTRFFTDENSGKVADKVRVHLSYVKENPVEKGNYKRDIPATFFSSEWIDNDNGLMPVEVRDEWLQDQFDRRIVVSVQPIYISDEDFDPLQYGILLYITKGSKVFKPTKEQLALDDAGITNDQWYYVALSIPTVVVVFFVFMYFFLYVNGKNRDFTDVTRKALNKKRRVLGKFSEMKKFKNMKNHKYTELPSYKKTSKQN.

Positions 1–22 (MRFHDSILIFFSLASLYQHVHG) are cleaved as a signal peptide. Residues Thr-34 and Thr-35 are each glycosylated (O-linked (Man) threonine). Residue Ser-36 is glycosylated (O-linked (Man) serine). Residue Thr-45 is glycosylated (O-linked (Man) threonine). O-linked (Man) serine glycosylation is present at Ser-49. Thr-55, Thr-57, and Thr-63 each carry an O-linked (Man) threonine glycan. Residue Ser-65 is glycosylated (O-linked (Man) serine). The O-linked (Man) threonine glycan is linked to Thr-71. A glycan (O-linked (Man) serine) is linked at Ser-80. 2 O-linked (Man) threonine glycosylation sites follow: Thr-89 and Thr-99. The O-linked (Man) serine glycan is linked to Ser-107. O-linked (Man) threonine glycans are attached at residues Thr-108 and Thr-112. 2 O-linked (Man) serine glycosylation sites follow: Ser-114 and Ser-115. Thr-117 carries an O-linked (Man) threonine glycan. Residues Ser-119 and Ser-148 are each glycosylated (O-linked (Man) serine). O-linked (Man) threonine glycosylation is present at Thr-156. Ser-171 carries an O-linked (Man) serine glycan. Thr-176 is a glycosylation site (O-linked (Man) threonine). Residue Ser-181 is glycosylated (O-linked (Man) serine). Residues Thr-188, Thr-192, Thr-195, and Thr-199 are each glycosylated (O-linked (Man) threonine). O-linked (Man) serine glycans are attached at residues Ser-203 and Ser-215. The Lumenal segment spans residues 230 to 317 (DIPATFFSSE…DAGITNDQWY (88 aa)). The chain crosses the membrane as a helical span at residues 318-338 (YVALSIPTVVVVFFVFMYFFL). The Cytoplasmic segment spans residues 339 to 392 (YVNGKNRDFTDVTRKALNKKRRVLGKFSEMKKFKNMKNHKYTELPSYKKTSKQN).

In terms of assembly, interacts with EXP1. PSG1-N' interacts with ERAD-related proteins involved in PMA1 quality control including EPS1, CDC48, UBX2 and SSM4. PSG1-C' interacts with the TLG1/2 SNARE complex proteins TLG1, TLG2 and VTI1. The precursor protein is cleaved into two polypeptide chains, PSG1-N' and PSG1-C'. The cleavage is performed in the Golgi apparatus by Ca(+)-dependent serine protease KEX2 between Arg-229 and Asp-230. Post-translationally, PSG1-N' is highly O-mannosylated.

Its subcellular location is the golgi apparatus lumen. It localises to the cytoplasmic vesicle. The protein localises to the COPI-coated vesicle membrane. Functionally, with EXP1, the specific cargo receptor protein for the plasma membrane ATPase PMA1, is involved in the transport and/or maturation of PMA1. EXP1 and PSG1 probably act sequentially to promote PMA1 sorting between the ER and the Golgi, with EXP1 promoting PMA1 export from the ER to the Golgi while PSG1 has a role in PMA1 maturation or quality control in the Golgi. PSG1 might also couple PMA1 sorting and maturation in the early secretory pathway with the glycosylation machinery. Its function is as follows. PSG1 is cleaved by KEX2 in two stable peptides, PSG1-N' and PSG1-C', the former supporting a role in maturation quality control, the latter having a role in modulating vesicular trafficking. This is PMA1 stabilization in the Golgi protein 1 from Saccharomyces cerevisiae (strain ATCC 204508 / S288c) (Baker's yeast).